A 510-amino-acid polypeptide reads, in one-letter code: ATP synthase subunit alpha (510 aa).

170 to 177 (GDRQTGKT) contacts ATP.

This sequence belongs to the ATPase alpha/beta chains family. F-type ATPases have 2 components, CF(1) - the catalytic core - and CF(0) - the membrane proton channel. CF(1) has five subunits: alpha(3), beta(3), gamma(1), delta(1), epsilon(1). CF(0) has three main subunits: a(1), b(2) and c(9-12). The alpha and beta chains form an alternating ring which encloses part of the gamma chain. CF(1) is attached to CF(0) by a central stalk formed by the gamma and epsilon chains, while a peripheral stalk is formed by the delta and b chains.

The protein resides in the cell inner membrane. The catalysed reaction is ATP + H2O + 4 H(+)(in) = ADP + phosphate + 5 H(+)(out). In terms of biological role, produces ATP from ADP in the presence of a proton gradient across the membrane. The alpha chain is a regulatory subunit. The chain is ATP synthase subunit alpha from Dictyoglomus thermophilum (strain ATCC 35947 / DSM 3960 / H-6-12).